The sequence spans 144 residues: Transcriptional regulator SlyA (144 aa).

An HTH marR-type domain is found at 2-135; sequence ESPLGSDLAR…LIKLIAKLEH (134 aa). Positions 49–72 form a DNA-binding region, H-T-H motif; that stretch reads QIQLAKAIGIEQPSLVRTLDQLEE.

Belongs to the SlyA family. As to quaternary structure, homodimer.

Transcription regulator that can specifically activate or repress expression of target genes. This is Transcriptional regulator SlyA from Escherichia coli O127:H6 (strain E2348/69 / EPEC).